Reading from the N-terminus, the 223-residue chain is 7-carboxy-7-deazaguanine synthase (223 aa).

Residues 12–14 (LQG) and Arg-27 each bind substrate. Residues 18-223 (FTGVPAIFIR…MQTHKYLNIA (206 aa)) form the Radical SAM core domain. 3 residues coordinate [4Fe-4S] cluster: Cys-31, Cys-35, and Cys-38. Thr-40 provides a ligand contact to Mg(2+). Thr-92 provides a ligand contact to substrate. Residues Gly-94 and 136-138 (SPK) contribute to the S-adenosyl-L-methionine site.

This sequence belongs to the radical SAM superfamily. 7-carboxy-7-deazaguanine synthase family. As to quaternary structure, homodimer. Requires [4Fe-4S] cluster as cofactor. It depends on S-adenosyl-L-methionine as a cofactor. The cofactor is Mg(2+).

The catalysed reaction is 6-carboxy-5,6,7,8-tetrahydropterin + H(+) = 7-carboxy-7-deazaguanine + NH4(+). It participates in purine metabolism; 7-cyano-7-deazaguanine biosynthesis. Its function is as follows. Catalyzes the complex heterocyclic radical-mediated conversion of 6-carboxy-5,6,7,8-tetrahydropterin (CPH4) to 7-carboxy-7-deazaguanine (CDG), a step common to the biosynthetic pathways of all 7-deazapurine-containing compounds. The sequence is that of 7-carboxy-7-deazaguanine synthase from Escherichia coli (strain K12).